Here is a 629-residue protein sequence, read N- to C-terminus: mRNA cleavage and polyadenylation factor CLP1 (629 aa).

ATP-binding residues include E21 and K72. Residues 142–166 form a disordered region; the sequence is YIAPRTTDPNTETESDPSGTAAATV. A compositionally biased stretch (polar residues) spans 148 to 159; it reads TDPNTETESDPS. 183–188 serves as a coordination point for ATP; the sequence is SAGKTS. The segment at 562-582 is disordered; that stretch reads PPRGGGGAGQPDSSTNPTDDE.

This sequence belongs to the Clp1 family. Clp1 subfamily. As to quaternary structure, component of a pre-mRNA cleavage factor complex. Interacts directly with PCF11.

It localises to the nucleus. In terms of biological role, required for endonucleolytic cleavage during polyadenylation-dependent pre-mRNA 3'-end formation. The sequence is that of mRNA cleavage and polyadenylation factor CLP1 from Mycosarcoma maydis (Corn smut fungus).